The chain runs to 503 residues: Arabinose import ATP-binding protein AraG 1 (503 aa).

ABC transporter domains are found at residues 5–240 (LRFD…MVGR) and 251–497 (RTLG…LPQT). 37-44 (GENGAGKS) provides a ligand contact to ATP.

This sequence belongs to the ABC transporter superfamily. Arabinose importer (TC 3.A.1.2.2) family. In terms of assembly, the complex is composed of two ATP-binding proteins (AraG), two transmembrane proteins (AraH) and a solute-binding protein (AraF).

It is found in the cell inner membrane. It carries out the reaction L-arabinose(out) + ATP + H2O = L-arabinose(in) + ADP + phosphate + H(+). Functionally, part of the ABC transporter complex AraFGH involved in arabinose import. Responsible for energy coupling to the transport system. This Burkholderia cenocepacia (strain HI2424) protein is Arabinose import ATP-binding protein AraG 1.